The primary structure comprises 346 residues: 4-hydroxy-2-oxovalerate aldolase (346 aa).

Positions 8-260 constitute a Pyruvate carboxyltransferase domain; the sequence is VTVHDMTLRD…ETGVDVFKIQ (253 aa). 16–17 contributes to the substrate binding site; that stretch reads RD. A Mn(2+)-binding site is contributed by D17. H20 (proton acceptor) is an active-site residue. Substrate-binding residues include S170 and H199. Mn(2+) contacts are provided by H199 and H201. Y290 contributes to the substrate binding site.

Belongs to the 4-hydroxy-2-oxovalerate aldolase family.

It carries out the reaction (S)-4-hydroxy-2-oxopentanoate = acetaldehyde + pyruvate. This chain is 4-hydroxy-2-oxovalerate aldolase, found in Polaromonas naphthalenivorans (strain CJ2).